Here is a 140-residue protein sequence, read N- to C-terminus: Putative pre-16S rRNA nuclease (140 aa).

This sequence belongs to the YqgF nuclease family.

It is found in the cytoplasm. Its function is as follows. Could be a nuclease involved in processing of the 5'-end of pre-16S rRNA. The protein is Putative pre-16S rRNA nuclease of Parabacteroides distasonis (strain ATCC 8503 / DSM 20701 / CIP 104284 / JCM 5825 / NCTC 11152).